The chain runs to 272 residues: N-acetylmuramoyl-L-alanine amidase CwlA (272 aa).

The region spanning 24 to 142 is the N-acetylmuramoyl-L-alanine amidase domain; sequence KAEYITIHNT…QDWNGKYCPH (119 aa).

It belongs to the N-acetylmuramoyl-L-alanine amidase 2 family.

The catalysed reaction is Hydrolyzes the link between N-acetylmuramoyl residues and L-amino acid residues in certain cell-wall glycopeptides.. In terms of biological role, autolysins are involved in some important biological processes such as cell separation, cell-wall turnover, competence for genetic transformation, formation of the flagella and sporulation. In Bacillus subtilis (strain 168), this protein is N-acetylmuramoyl-L-alanine amidase CwlA (cwlA).